The chain runs to 601 residues: Elongation factor 4 (601 aa).

The 183-residue stretch at 7 to 189 (DNIRNFSIVA…AIVKRLPAPK (183 aa)) folds into the tr-type G domain. GTP contacts are provided by residues 19–24 (DHGKST) and 136–139 (NKVD).

Belongs to the TRAFAC class translation factor GTPase superfamily. Classic translation factor GTPase family. LepA subfamily.

The protein localises to the cell inner membrane. It carries out the reaction GTP + H2O = GDP + phosphate + H(+). In terms of biological role, required for accurate and efficient protein synthesis under certain stress conditions. May act as a fidelity factor of the translation reaction, by catalyzing a one-codon backward translocation of tRNAs on improperly translocated ribosomes. Back-translocation proceeds from a post-translocation (POST) complex to a pre-translocation (PRE) complex, thus giving elongation factor G a second chance to translocate the tRNAs correctly. Binds to ribosomes in a GTP-dependent manner. This is Elongation factor 4 from Methylorubrum extorquens (strain CM4 / NCIMB 13688) (Methylobacterium extorquens).